Consider the following 914-residue polypeptide: Isoleucine--tRNA ligase (914 aa).

The short motif at 64–74 (PYANGNFHLGH) is the 'HIGH' region element. Glu557 provides a ligand contact to L-isoleucyl-5'-AMP. A 'KMSKS' region motif is present at residues 598–602 (PMSKS). Lys601 contributes to the ATP binding site. The Zn(2+) site is built by Cys889, Cys892, Cys906, and Cys909.

It belongs to the class-I aminoacyl-tRNA synthetase family. IleS type 1 subfamily. As to quaternary structure, monomer. Requires Zn(2+) as cofactor.

The protein resides in the cytoplasm. The catalysed reaction is tRNA(Ile) + L-isoleucine + ATP = L-isoleucyl-tRNA(Ile) + AMP + diphosphate. In terms of biological role, catalyzes the attachment of isoleucine to tRNA(Ile). As IleRS can inadvertently accommodate and process structurally similar amino acids such as valine, to avoid such errors it has two additional distinct tRNA(Ile)-dependent editing activities. One activity is designated as 'pretransfer' editing and involves the hydrolysis of activated Val-AMP. The other activity is designated 'posttransfer' editing and involves deacylation of mischarged Val-tRNA(Ile). The polypeptide is Isoleucine--tRNA ligase (Leptospira interrogans serogroup Icterohaemorrhagiae serovar copenhageni (strain Fiocruz L1-130)).